Consider the following 757-residue polypeptide: MSESTYPSVKDLTLEEKASLTSGGDAWHLQGVESKGIPSYMITDGPHGLRKSLASSAGETDLDDSVPATCFPPAAGLSSSWNPELIHKVGEAMAEECIQEKVAVILGPGVNIKRNPLGGRCFEYWSEDPYLAGHEAIGIVEGVQSKGVGTSLKHFAANNQETDRLRVDARISPRALREIYFPAFEHIVKKAQPWTIMCSYNRINGVHSAQNHWLLTDVLRDEWGFDGIVMSDWGADHDRGASLNAGLNLEMPPSYTDDQIVYAVRDGLITPAQLDRMAQGMIDLVNKTRAAMSIDNYRFDVDAHDEVAHQAAIESIVMLKNDDAILPLNAGPVANPSATPQKIAVIGEFARTPRYQGGGSSHITPTKMTSFLDTLAERGIKADFAPGFTLDLEPADPALESEAVETAKNADVVLMFLGLPEAVESEGFDRDTLDMPAKQIALLEQVAAANQNVVVVLSNGSVITVAPWAKNAKGILESWLLGQSGGPALADVIFGQVSPSGKLAQSIPLDINDDPSMLNWPGEEGHVDYGEGVFAGYRYYDTYGKAVDYPFGYGLSYATFEITGVAVAKTGANTATVTATVTNTSDVDAAETVQVYVVPGKADVARPKHELKGFTKAFLKAGESKTVAIDLDERAFAYWSEKYNDWHVEAGEYAIEVGVSSRDIADTVAVALDGDGKTQPLTEWSTYGEWEADPFGAKIVAAVAAAGEAGELTKLPDNAMMRMFLNPMPINSLPTLLGEGGKKIAQFMLDEYAKLSK.

Residue aspartate 232 is part of the active site.

This sequence belongs to the glycosyl hydrolase 3 family. As to quaternary structure, homotetramer.

Completely inhibited by Cu(2+) and activated by Co(2+). Catalyzes the hydrolysis of a non-reducing terminal alpha-L-arabinopyranosidic linkage in ginsenoside Rb2 (alpha-L-arabinopyranosyl-(1-&gt;6)-alpha-D-glucopyranosyl) to release alpha-D-glucopyranosyl (Rd). It is not able to hydrolyze alpha-L-arabinofuranosyl-(1-&gt;6)-alpha-D-glucopyranosyl (Rc). The sequence is that of Exo-alpha-(1-&gt;6)-L-arabinopyranosidase (apy) from Bifidobacterium longum.